We begin with the raw amino-acid sequence, 70 residues long: Putative defensin-like protein 73 (70 aa).

The signal sequence occupies residues 1 to 29 (MNCKIEFMSFLVMTSIVILFLFVSGKVEA). 4 disulfide bridges follow: C33–C68, C37–C57, C43–C66, and C47–C67.

It belongs to the DEFL family.

It is found in the secreted. This chain is Putative defensin-like protein 73 (LCR44), found in Arabidopsis thaliana (Mouse-ear cress).